The primary structure comprises 195 residues: uncharacterized protein (195 aa).

The HTH tetR-type domain maps to 6–66 (VESRKRLLKA…ELITDFHSRV (61 aa)). A DNA-binding region (H-T-H motif) is located at residues 29–48 (KVSEIVKKAGFTQPSFYLYF).

This is an uncharacterized protein from Bacillus subtilis (strain 168).